Here is a 148-residue protein sequence, read N- to C-terminus: Transcriptional repressor NrdR (148 aa).

The segment at 3–34 (CPFCHNEDTQVLDTRVSDEGDTIRRRRRCAKC) is a zinc-finger region. Residues 49 to 139 (PAIVKKNGSR…VYRSFADIES (91 aa)) enclose the ATP-cone domain.

It belongs to the NrdR family. It depends on Zn(2+) as a cofactor.

Negatively regulates transcription of bacterial ribonucleotide reductase nrd genes and operons by binding to NrdR-boxes. The protein is Transcriptional repressor NrdR of Polynucleobacter necessarius subsp. necessarius (strain STIR1).